The chain runs to 463 residues: Argininosuccinate lyase (463 aa).

The protein belongs to the lyase 1 family. Argininosuccinate lyase subfamily.

It localises to the cytoplasm. It carries out the reaction 2-(N(omega)-L-arginino)succinate = fumarate + L-arginine. It functions in the pathway amino-acid biosynthesis; L-arginine biosynthesis; L-arginine from L-ornithine and carbamoyl phosphate: step 3/3. This is Argininosuccinate lyase from Methylorubrum extorquens (strain CM4 / NCIMB 13688) (Methylobacterium extorquens).